Reading from the N-terminus, the 410-residue chain is Arginine biosynthesis bifunctional protein ArgJ (410 aa).

Positions 158, 184, 195, 282, 405, and 410 each coordinate substrate. Residue threonine 195 is the Nucleophile of the active site.

Belongs to the ArgJ family. As to quaternary structure, heterotetramer of two alpha and two beta chains.

The protein localises to the cytoplasm. The enzyme catalyses N(2)-acetyl-L-ornithine + L-glutamate = N-acetyl-L-glutamate + L-ornithine. It catalyses the reaction L-glutamate + acetyl-CoA = N-acetyl-L-glutamate + CoA + H(+). The protein operates within amino-acid biosynthesis; L-arginine biosynthesis; L-ornithine and N-acetyl-L-glutamate from L-glutamate and N(2)-acetyl-L-ornithine (cyclic): step 1/1. It participates in amino-acid biosynthesis; L-arginine biosynthesis; N(2)-acetyl-L-ornithine from L-glutamate: step 1/4. Functionally, catalyzes two activities which are involved in the cyclic version of arginine biosynthesis: the synthesis of N-acetylglutamate from glutamate and acetyl-CoA as the acetyl donor, and of ornithine by transacetylation between N(2)-acetylornithine and glutamate. This is Arginine biosynthesis bifunctional protein ArgJ from Bartonella henselae (strain ATCC 49882 / DSM 28221 / CCUG 30454 / Houston 1) (Rochalimaea henselae).